The primary structure comprises 329 residues: Protein RecA (329 aa).

63–70 (GNESSGKT) is a binding site for ATP.

It belongs to the RecA family.

It localises to the cytoplasm. In terms of biological role, can catalyze the hydrolysis of ATP in the presence of single-stranded DNA, the ATP-dependent uptake of single-stranded DNA by duplex DNA, and the ATP-dependent hybridization of homologous single-stranded DNAs. It interacts with LexA causing its activation and leading to its autocatalytic cleavage. The protein is Protein RecA of Malacoplasma penetrans (strain HF-2) (Mycoplasma penetrans).